We begin with the raw amino-acid sequence, 75 residues long: uncharacterized protein (75 aa).

The protein localises to the plastid. The protein resides in the chloroplast. This is an uncharacterized protein from Calycanthus floridus var. glaucus (Eastern sweetshrub).